The sequence spans 485 residues: Aspartyl/glutamyl-tRNA(Asn/Gln) amidotransferase subunit B (485 aa).

Belongs to the GatB/GatE family. GatB subfamily. Heterotrimer of A, B and C subunits.

The enzyme catalyses L-glutamyl-tRNA(Gln) + L-glutamine + ATP + H2O = L-glutaminyl-tRNA(Gln) + L-glutamate + ADP + phosphate + H(+). The catalysed reaction is L-aspartyl-tRNA(Asn) + L-glutamine + ATP + H2O = L-asparaginyl-tRNA(Asn) + L-glutamate + ADP + phosphate + 2 H(+). Functionally, allows the formation of correctly charged Asn-tRNA(Asn) or Gln-tRNA(Gln) through the transamidation of misacylated Asp-tRNA(Asn) or Glu-tRNA(Gln) in organisms which lack either or both of asparaginyl-tRNA or glutaminyl-tRNA synthetases. The reaction takes place in the presence of glutamine and ATP through an activated phospho-Asp-tRNA(Asn) or phospho-Glu-tRNA(Gln). The polypeptide is Aspartyl/glutamyl-tRNA(Asn/Gln) amidotransferase subunit B (Bordetella petrii (strain ATCC BAA-461 / DSM 12804 / CCUG 43448)).